Here is a 138-residue protein sequence, read N- to C-terminus: ATP synthase epsilon chain, chloroplastic (138 aa).

This sequence belongs to the ATPase epsilon chain family. In terms of assembly, F-type ATPases have 2 components, CF(1) - the catalytic core - and CF(0) - the membrane proton channel. CF(1) has five subunits: alpha(3), beta(3), gamma(1), delta(1), epsilon(1). CF(0) has three main subunits: a, b and c.

It localises to the plastid. The protein localises to the chloroplast thylakoid membrane. Produces ATP from ADP in the presence of a proton gradient across the membrane. The polypeptide is ATP synthase epsilon chain, chloroplastic (Staurastrum punctulatum (Green alga)).